A 304-amino-acid polypeptide reads, in one-letter code: Arginine-binding protein ArgT (304 aa).

The first 26 residues, 1-26 (MRFPKIPKRAVAATVGIVATSFTLAS), serve as a signal peptide directing secretion. Residue Cys-27 is the site of N-palmitoyl cysteine attachment. Cys-27 carries S-diacylglycerol cysteine lipidation.

Belongs to the bacterial solute-binding protein 3 family. The complex is probably composed of two ATP-binding proteins (ArgV), two transmembrane proteins (ArgU) and a solute-binding protein (ArgT).

The protein localises to the cell membrane. Its function is as follows. Part of the ABC transporter complex ArgTUV involved in L-arginine import. May also transport L-citrulline. Binds L-arginine and its molecular precursor L-citrulline, but not L-histidine, L-glutamate, L-glutamine, L-lysine or L-cysteine. The protein is Arginine-binding protein ArgT of Corynebacterium glutamicum (strain ATCC 13032 / DSM 20300 / JCM 1318 / BCRC 11384 / CCUG 27702 / LMG 3730 / NBRC 12168 / NCIMB 10025 / NRRL B-2784 / 534).